We begin with the raw amino-acid sequence, 215 residues long: UPF0126 membrane protein DR_2368 (215 aa).

6 helical membrane-spanning segments follow: residues 15–35, 39–59, 75–95, 101–121, 123–143, and 162–182; these read LHWL…LLGV, FDLF…GAIR, TYLW…ERLA, LSLF…LGAI, IGLG…GGGI, and LYAT…PHFT.

The protein belongs to the UPF0126 family.

The protein resides in the cell membrane. This is UPF0126 membrane protein DR_2368 from Deinococcus radiodurans (strain ATCC 13939 / DSM 20539 / JCM 16871 / CCUG 27074 / LMG 4051 / NBRC 15346 / NCIMB 9279 / VKM B-1422 / R1).